A 396-amino-acid chain; its full sequence is Immunoglobulin heavy constant gamma 4 (396 aa).

Residues 1-98 (ASTKGPSVFP…PSNTKVDKRV (98 aa)) form a CH1 region. Over 1–347 (ASTKGPSVFP…DGELDGLWTT (347 aa)) the chain is Extracellular. Ig-like domains are found at residues 6-99 (PSVF…KRVE), 118-217 (PSVF…KTIS), and 226-322 (PQVY…KSLS). Cysteines 27 and 83 form a disulfide. A hinge region spans residues 99-110 (ESKYGPPCPSCP). The segment at 111–220 (APEFLGGPSV…SIEKTISKAK (110 aa)) is CH2. 2 disulfides stabilise this stretch: C141/C201 and C247/C305. N-linked (GlcNAc...) (complex) asparagine glycosylation occurs at N177. The tract at residues 221–327 (GQPREPQVYT…QKSLSLSLEL (107 aa)) is CH3. A helical membrane pass occupies residues 348–368 (ITIFITLFLLSVCYSATVTFF). The Cytoplasmic segment spans residues 369-396 (KVKWIFSSVVDLKQTIVPDYRNMIRQGA).

Immunoglobulins are composed of two identical heavy chains and two identical light chains; disulfide-linked. Post-translationally, glycosylation on Asn-177 is required for interaction with Fc receptors and ability to activate the complement pathway. In terms of processing, (Microbial infection) Deglycosylation on Asn-177 by S.pyogenes EndoS or Endos2 endoglucosidases prevents interaction between immunoglobulin-gamma (IgG) and Fc receptors, impairing ability to activate the complement pathway.

The protein resides in the secreted. It is found in the cell membrane. Its function is as follows. Constant region of immunoglobulin heavy chains. Immunoglobulins, also known as antibodies, are membrane-bound or secreted glycoproteins produced by B lymphocytes. In the recognition phase of humoral immunity, the membrane-bound immunoglobulins serve as receptors which, upon binding of a specific antigen, trigger the clonal expansion and differentiation of B lymphocytes into immunoglobulins-secreting plasma cells. Secreted immunoglobulins mediate the effector phase of humoral immunity, which results in the elimination of bound antigens. The antigen binding site is formed by the variable domain of one heavy chain, together with that of its associated light chain. Thus, each immunoglobulin has two antigen binding sites with remarkable affinity for a particular antigen. The variable domains are assembled by a process called V-(D)-J rearrangement and can then be subjected to somatic hypermutations which, after exposure to antigen and selection, allow affinity maturation for a particular antigen. In Homo sapiens (Human), this protein is Immunoglobulin heavy constant gamma 4.